Consider the following 287-residue polypeptide: 4-diphosphocytidyl-2-C-methyl-D-erythritol kinase (287 aa).

Lys-10 is an active-site residue. Position 94 to 104 (94 to 104 (PVAAGLGGGSA)) interacts with ATP. Residue Asp-136 is part of the active site.

Belongs to the GHMP kinase family. IspE subfamily.

It carries out the reaction 4-CDP-2-C-methyl-D-erythritol + ATP = 4-CDP-2-C-methyl-D-erythritol 2-phosphate + ADP + H(+). Its pathway is isoprenoid biosynthesis; isopentenyl diphosphate biosynthesis via DXP pathway; isopentenyl diphosphate from 1-deoxy-D-xylulose 5-phosphate: step 3/6. In terms of biological role, catalyzes the phosphorylation of the position 2 hydroxy group of 4-diphosphocytidyl-2C-methyl-D-erythritol. This is 4-diphosphocytidyl-2-C-methyl-D-erythritol kinase from Pelotomaculum thermopropionicum (strain DSM 13744 / JCM 10971 / SI).